A 473-amino-acid polypeptide reads, in one-letter code: Alliin lyase 2 (473 aa).

An N-terminal signal peptide occupies residues 1–15 (MICLVILTCIIMSNS). Positions 16–25 (FVNNNNMVQA) are excised as a propeptide. The EGF-like; atypical domain occupies 38–84 (EAVANINCSEHGRAFLDGIISEGSPKCECNTCYTGPDCSEKIQGCSA). N44 is a glycosylation site (N-linked (GlcNAc...) asparagine). Intrachain disulfides connect C45–C64, C66–C75, and C69–C82. 117 to 125 (YFFNPVSNF) is a chloride binding site. N-linked (GlcNAc...) asparagine glycosylation is found at N171 and N216. K276 is modified (N6-(pyridoxal phosphate)lysine). An N-linked (GlcNAc...) asparagine glycan is attached at N353. A disulfide bridge links C393 with C401.

It belongs to the alliinase family. Homodimer. The cofactor is pyridoxal 5'-phosphate. In terms of processing, glycosylated. As to expression, high expression in bulbs, lower expression in leaves, and no expression in roots.

The protein localises to the vacuole. It carries out the reaction an S-alkyl-L-cysteine S-oxide = an S-alkyl sulfenate + 2-aminoprop-2-enoate. The catalysed reaction is alliin = allylsulfenate + 2-aminoprop-2-enoate. Able to cleave the C-S bond of sulfoxide derivatives of Cys to produce allicin, thus giving rise to all sulfur compounds which are responsible for most of the properties of garlic, such as the specific smell and flavor as well as the health benefits like blood lipid or blood pressure lowering. The protein is Alliin lyase 2 of Allium sativum (Garlic).